Consider the following 240-residue polypeptide: Sugar fermentation stimulation protein homolog (240 aa).

It belongs to the SfsA family.

This Natranaerobius thermophilus (strain ATCC BAA-1301 / DSM 18059 / JW/NM-WN-LF) protein is Sugar fermentation stimulation protein homolog.